The chain runs to 476 residues: Ribulose bisphosphate carboxylase large chain (476 aa).

The propeptide occupies 1–2 (MS). P3 bears the N-acetylproline mark. At K14 the chain carries N6,N6,N6-trimethyllysine. Substrate-binding residues include N123 and T173. K175 serves as the catalytic Proton acceptor. Position 177 (K177) interacts with substrate. K201, D203, and E204 together coordinate Mg(2+). K201 is modified (N6-carboxylysine). R295, H327, and S379 together coordinate substrate.

Belongs to the RuBisCO large chain family. Type I subfamily. As to quaternary structure, heterohexadecamer of 8 large chains and 8 small chains; disulfide-linked. The disulfide link is formed within the large subunit homodimers. Requires Mg(2+) as cofactor. The disulfide bond which can form in the large chain dimeric partners within the hexadecamer appears to be associated with oxidative stress and protein turnover.

Its subcellular location is the plastid. The protein localises to the chloroplast. It catalyses the reaction 2 (2R)-3-phosphoglycerate + 2 H(+) = D-ribulose 1,5-bisphosphate + CO2 + H2O. The catalysed reaction is D-ribulose 1,5-bisphosphate + O2 = 2-phosphoglycolate + (2R)-3-phosphoglycerate + 2 H(+). Its function is as follows. RuBisCO catalyzes two reactions: the carboxylation of D-ribulose 1,5-bisphosphate, the primary event in carbon dioxide fixation, as well as the oxidative fragmentation of the pentose substrate in the photorespiration process. Both reactions occur simultaneously and in competition at the same active site. The chain is Ribulose bisphosphate carboxylase large chain from Barnadesia caryophylla (Xenophontia caryophylla).